A 269-amino-acid polypeptide reads, in one-letter code: Thiazole synthase (269 aa).

Lys95 (schiff-base intermediate with DXP) is an active-site residue. 1-deoxy-D-xylulose 5-phosphate-binding positions include Gly156, 182–183 (AG), and 204–205 (NT).

It belongs to the ThiG family. Homotetramer. Forms heterodimers with either ThiH or ThiS.

It localises to the cytoplasm. It carries out the reaction [ThiS sulfur-carrier protein]-C-terminal-Gly-aminoethanethioate + 2-iminoacetate + 1-deoxy-D-xylulose 5-phosphate = [ThiS sulfur-carrier protein]-C-terminal Gly-Gly + 2-[(2R,5Z)-2-carboxy-4-methylthiazol-5(2H)-ylidene]ethyl phosphate + 2 H2O + H(+). The protein operates within cofactor biosynthesis; thiamine diphosphate biosynthesis. Its function is as follows. Catalyzes the rearrangement of 1-deoxy-D-xylulose 5-phosphate (DXP) to produce the thiazole phosphate moiety of thiamine. Sulfur is provided by the thiocarboxylate moiety of the carrier protein ThiS. In vitro, sulfur can be provided by H(2)S. The chain is Thiazole synthase from Shewanella frigidimarina (strain NCIMB 400).